The following is a 308-amino-acid chain: Taste receptor type 2 member 107 (308 aa).

The Extracellular portion of the chain corresponds to 1-7 (MLSAAEG). The helical transmembrane segment at 8-28 (ILLCVVTSEAVLGVLGDTFIA) threads the bilayer. At 29-43 (LANCMEYAKNKKLSK) the chain is on the cytoplasmic side. Residues 44–64 (IGFILIGLAISRIGVVWIIIL) form a helical membrane-spanning segment. The Extracellular segment spans residues 65–94 (QGYMQVFFPHILTFGNITEYITYIWVFLNH). Asparagine 80 carries an N-linked (GlcNAc...) asparagine glycan. Residues 95–115 (LSVWFATNLNILYFLKIANFS) form a helical membrane-spanning segment. At 116-127 (NSVFLWLKSRVR) the chain is on the cytoplasmic side. The helical transmembrane segment at 128–148 (VVFIFLSGCLLTSWLLCFPQF) threads the bilayer. Over 149-180 (SKMLNNSKMYWGNTSWLQQQKNVFLINQSLTN) the chain is Extracellular. 3 N-linked (GlcNAc...) asparagine glycosylation sites follow: asparagine 153, asparagine 161, and asparagine 175. The chain crosses the membrane as a helical span at residues 181–201 (LGIFFFIIVSLITCFLLIVFL). Residues 202 to 232 (WRHIRQMHSDGSGLRDLNTEAHVKAMRVLIS) lie on the Cytoplasmic side of the membrane. Residues 233–253 (FAVLFILHFVGLSIQVLCFFL) form a helical membrane-spanning segment. The Extracellular portion of the chain corresponds to 254 to 258 (PQNNL). The chain crosses the membrane as a helical span at residues 259–279 (LFITGLIATCLYPCGHSIILI). At 280–308 (LGNKQLKQASLKALQHLTCCETKRNLSVT) the chain is on the cytoplasmic side.

Belongs to the G-protein coupled receptor T2R family.

The protein localises to the membrane. Its function is as follows. Putative taste receptor which may play a role in the perception of bitterness. This is Taste receptor type 2 member 107 from Rattus norvegicus (Rat).